The chain runs to 295 residues: 4-diphosphocytidyl-2-C-methyl-D-erythritol kinase (295 aa).

Lys-22 is a catalytic residue. Residue 106–116 (PAGGGFGGGSS) participates in ATP binding. Asp-148 is an active-site residue.

The protein belongs to the GHMP kinase family. IspE subfamily.

The enzyme catalyses 4-CDP-2-C-methyl-D-erythritol + ATP = 4-CDP-2-C-methyl-D-erythritol 2-phosphate + ADP + H(+). It participates in isoprenoid biosynthesis; isopentenyl diphosphate biosynthesis via DXP pathway; isopentenyl diphosphate from 1-deoxy-D-xylulose 5-phosphate: step 3/6. Catalyzes the phosphorylation of the position 2 hydroxy group of 4-diphosphocytidyl-2C-methyl-D-erythritol. The sequence is that of 4-diphosphocytidyl-2-C-methyl-D-erythritol kinase from Xanthomonas campestris pv. campestris (strain 8004).